A 545-amino-acid chain; its full sequence is Eukaryotic translation initiation factor 3 subunit D-2 (545 aa).

Residues 94 to 148 (FQRGRFRGNTRNNPRTRGRTGRGGAVTGTGGNQPGVGVNERTKYGKGRDNRRQMG) are disordered. Over residues 95–113 (QRGRFRGNTRNNPRTRGRT) the composition is skewed to basic residues. Residues 114–127 (GRGGAVTGTGGNQP) are compositionally biased toward gly residues. Positions 133 to 145 (ERTKYGKGRDNRR) are enriched in basic and acidic residues. The tract at residues 287 to 301 (QFDLLTVNETALEPP) is RNA gate.

It belongs to the eIF-3 subunit D family. Component of the eukaryotic translation initiation factor 3 (eIF-3) complex. The eIF-3 complex interacts with pix.

It localises to the cytoplasm. Its function is as follows. mRNA cap-binding component of the eukaryotic translation initiation factor 3 (eIF-3) complex, which is involved in protein synthesis of a specialized repertoire of mRNAs and, together with other initiation factors, stimulates binding of mRNA and methionyl-tRNAi to the 40S ribosome. The eIF-3 complex specifically targets and initiates translation of a subset of mRNAs involved in cell proliferation. In the eIF-3 complex, eif3d specifically recognizes and binds the 7-methylguanosine cap of a subset of mRNAs. The protein is Eukaryotic translation initiation factor 3 subunit D-2 of Drosophila pseudoobscura pseudoobscura (Fruit fly).